A 336-amino-acid polypeptide reads, in one-letter code: Protein FPV127 (336 aa).

Residues 1–22 form a disordered region; the sequence is MGGGLVLPTRDPPKEQDTSETA.

This sequence belongs to the poxviruses A16/G9/J5 family.

The chain is Protein FPV127 from Vertebrata (FPV).